Here is a 111-residue protein sequence, read N- to C-terminus: Universal stress protein B (111 aa).

2 helical membrane passes run 1-21 (MINT…NMLR) and 90-110 (FILT…LMLW).

Belongs to the universal stress protein B family.

Its subcellular location is the cell inner membrane. The sequence is that of Universal stress protein B from Edwardsiella ictaluri (strain 93-146).